An 89-amino-acid polypeptide reads, in one-letter code: Large ribosomal subunit protein bL27 (89 aa).

It belongs to the bacterial ribosomal protein bL27 family.

In Ruegeria sp. (strain TM1040) (Silicibacter sp.), this protein is Large ribosomal subunit protein bL27.